Here is an 883-residue protein sequence, read N- to C-terminus: Alanine--tRNA ligase (883 aa).

Positions 563, 567, 677, and 681 each coordinate Zn(2+).

It belongs to the class-II aminoacyl-tRNA synthetase family. It depends on Zn(2+) as a cofactor.

It is found in the cytoplasm. The catalysed reaction is tRNA(Ala) + L-alanine + ATP = L-alanyl-tRNA(Ala) + AMP + diphosphate. In terms of biological role, catalyzes the attachment of alanine to tRNA(Ala) in a two-step reaction: alanine is first activated by ATP to form Ala-AMP and then transferred to the acceptor end of tRNA(Ala). Also edits incorrectly charged Ser-tRNA(Ala) and Gly-tRNA(Ala) via its editing domain. The chain is Alanine--tRNA ligase from Cereibacter sphaeroides (strain ATCC 17025 / ATH 2.4.3) (Rhodobacter sphaeroides).